The chain runs to 489 residues: Argininosuccinate lyase (489 aa).

The disordered stretch occupies residues 1–20 (MSEPSAAVGQRPGGESAPAH).

Belongs to the lyase 1 family. Argininosuccinate lyase subfamily.

The protein resides in the cytoplasm. It catalyses the reaction 2-(N(omega)-L-arginino)succinate = fumarate + L-arginine. Its pathway is amino-acid biosynthesis; L-arginine biosynthesis; L-arginine from L-ornithine and carbamoyl phosphate: step 3/3. The polypeptide is Argininosuccinate lyase (Acidothermus cellulolyticus (strain ATCC 43068 / DSM 8971 / 11B)).